The following is a 248-amino-acid chain: Probable transcriptional regulatory protein Pfl01_4410 (248 aa).

It belongs to the TACO1 family.

It is found in the cytoplasm. The sequence is that of Probable transcriptional regulatory protein Pfl01_4410 from Pseudomonas fluorescens (strain Pf0-1).